Reading from the N-terminus, the 429-residue chain is Histidine--tRNA ligase (429 aa).

The protein belongs to the class-II aminoacyl-tRNA synthetase family. In terms of assembly, homodimer.

Its subcellular location is the cytoplasm. It catalyses the reaction tRNA(His) + L-histidine + ATP = L-histidyl-tRNA(His) + AMP + diphosphate + H(+). In Pseudomonas aeruginosa (strain LESB58), this protein is Histidine--tRNA ligase.